Consider the following 471-residue polypeptide: Putative F-box protein At5g36200 (471 aa).

Positions 1-46 (MAMSDLPNDLVEEIISRVPVKSIRAVSSTCKNWNTLSNDHSFTRKL) constitute an F-box domain.

The chain is Putative F-box protein At5g36200 from Arabidopsis thaliana (Mouse-ear cress).